Consider the following 116-residue polypeptide: Large ribosomal subunit protein uL18 (116 aa).

This sequence belongs to the universal ribosomal protein uL18 family. Part of the 50S ribosomal subunit; part of the 5S rRNA/L5/L18/L25 subcomplex. Contacts the 5S and 23S rRNAs.

In terms of biological role, this is one of the proteins that bind and probably mediate the attachment of the 5S RNA into the large ribosomal subunit, where it forms part of the central protuberance. This chain is Large ribosomal subunit protein uL18, found in Novosphingobium aromaticivorans (strain ATCC 700278 / DSM 12444 / CCUG 56034 / CIP 105152 / NBRC 16084 / F199).